The primary structure comprises 505 residues: Histidine ammonia-lyase (505 aa).

The segment at residues 141-143 (ASG) is a cross-link (5-imidazolinone (Ala-Gly)). 2,3-didehydroalanine (Ser) is present on Ser-142.

Belongs to the PAL/histidase family. In terms of processing, contains an active site 4-methylidene-imidazol-5-one (MIO), which is formed autocatalytically by cyclization and dehydration of residues Ala-Ser-Gly.

The protein resides in the cytoplasm. It carries out the reaction L-histidine = trans-urocanate + NH4(+). It participates in amino-acid degradation; L-histidine degradation into L-glutamate; N-formimidoyl-L-glutamate from L-histidine: step 1/3. The protein is Histidine ammonia-lyase of Bacillus cereus (strain AH187).